We begin with the raw amino-acid sequence, 164 residues long: C-phycoerythrin class 1 subunit alpha (164 aa).

Residues cysteine 82 and cysteine 139 each contribute to the (2R,3E)-phycoerythrobilin site.

The protein belongs to the phycobiliprotein family. In terms of assembly, heterodimer of an alpha and a beta chain. In terms of processing, contains two covalently linked phycoerythrobilin chromophores.

It localises to the cellular thylakoid membrane. In terms of biological role, light-harvesting photosynthetic bile pigment-protein from the phycobiliprotein complex. The chain is C-phycoerythrin class 1 subunit alpha (cpeA) from Synechococcus sp. (strain WH8020).